The sequence spans 409 residues: Probable peptidoglycan glycosyltransferase FtsW (409 aa).

9 helical membrane passes run leucine 42–leucine 62, proline 72–alanine 92, leucine 108–glycine 128, valine 135–alanine 155, leucine 178–leucine 198, leucine 213–valine 233, phenylalanine 303–isoleucine 323, tyrosine 337–alanine 357, and leucine 368–leucine 388.

Belongs to the SEDS family. FtsW subfamily.

It localises to the cell inner membrane. It catalyses the reaction [GlcNAc-(1-&gt;4)-Mur2Ac(oyl-L-Ala-gamma-D-Glu-L-Lys-D-Ala-D-Ala)](n)-di-trans,octa-cis-undecaprenyl diphosphate + beta-D-GlcNAc-(1-&gt;4)-Mur2Ac(oyl-L-Ala-gamma-D-Glu-L-Lys-D-Ala-D-Ala)-di-trans,octa-cis-undecaprenyl diphosphate = [GlcNAc-(1-&gt;4)-Mur2Ac(oyl-L-Ala-gamma-D-Glu-L-Lys-D-Ala-D-Ala)](n+1)-di-trans,octa-cis-undecaprenyl diphosphate + di-trans,octa-cis-undecaprenyl diphosphate + H(+). The protein operates within cell wall biogenesis; peptidoglycan biosynthesis. In terms of biological role, peptidoglycan polymerase that is essential for cell division. This chain is Probable peptidoglycan glycosyltransferase FtsW, found in Idiomarina loihiensis (strain ATCC BAA-735 / DSM 15497 / L2-TR).